Here is a 96-residue protein sequence, read N- to C-terminus: Co-chaperonin GroES (96 aa).

The protein belongs to the GroES chaperonin family. As to quaternary structure, heptamer of 7 subunits arranged in a ring. Interacts with the chaperonin GroEL.

Its subcellular location is the cytoplasm. Its function is as follows. Together with the chaperonin GroEL, plays an essential role in assisting protein folding. The GroEL-GroES system forms a nano-cage that allows encapsulation of the non-native substrate proteins and provides a physical environment optimized to promote and accelerate protein folding. GroES binds to the apical surface of the GroEL ring, thereby capping the opening of the GroEL channel. The protein is Co-chaperonin GroES of Geobacter sp. (strain M21).